The sequence spans 434 residues: D-amino acid dehydrogenase (434 aa).

3-17 (VLVLGSGVIGTASAY) is an FAD binding site.

The protein belongs to the DadA oxidoreductase family. FAD serves as cofactor.

It catalyses the reaction a D-alpha-amino acid + A + H2O = a 2-oxocarboxylate + AH2 + NH4(+). The protein operates within amino-acid degradation; D-alanine degradation; NH(3) and pyruvate from D-alanine: step 1/1. Functionally, oxidative deamination of D-amino acids. This Pseudomonas entomophila (strain L48) protein is D-amino acid dehydrogenase.